The primary structure comprises 70 residues: Protein SlyX homolog (70 aa).

This sequence belongs to the SlyX family.

This is Protein SlyX homolog from Shewanella denitrificans (strain OS217 / ATCC BAA-1090 / DSM 15013).